The chain runs to 510 residues: Bifunctional purine biosynthesis protein PurH (510 aa).

The MGS-like domain maps to 1 to 144; the sequence is MSKRALISVT…KNYKDVIVVV (144 aa).

It belongs to the PurH family.

It catalyses the reaction (6R)-10-formyltetrahydrofolate + 5-amino-1-(5-phospho-beta-D-ribosyl)imidazole-4-carboxamide = 5-formamido-1-(5-phospho-D-ribosyl)imidazole-4-carboxamide + (6S)-5,6,7,8-tetrahydrofolate. It carries out the reaction IMP + H2O = 5-formamido-1-(5-phospho-D-ribosyl)imidazole-4-carboxamide. It participates in purine metabolism; IMP biosynthesis via de novo pathway; 5-formamido-1-(5-phospho-D-ribosyl)imidazole-4-carboxamide from 5-amino-1-(5-phospho-D-ribosyl)imidazole-4-carboxamide (10-formyl THF route): step 1/1. Its pathway is purine metabolism; IMP biosynthesis via de novo pathway; IMP from 5-formamido-1-(5-phospho-D-ribosyl)imidazole-4-carboxamide: step 1/1. This is Bifunctional purine biosynthesis protein PurH from Clostridioides difficile (strain 630) (Peptoclostridium difficile).